We begin with the raw amino-acid sequence, 190 residues long: Movement protein TGB3 (190 aa).

The Cytoplasmic segment spans residues 1-52; it reads MDPPVILHSPNCSCQFCSSELPSTHTCGSQDRTVPLHVEATAAGHMEAKNFS. The helical transmembrane segment at 53–73 threads the bilayer; it reads LQYVLLVAFVSVLLGFSFCVY. Over 74-166 the chain is Lumenal; it reads LKSMSNDEAS…TPCENNVLLK (93 aa). Residues tyrosine 89 and tyrosine 120 each carry the phosphotyrosine modification. The short motif at 89-93 is the Involved in plasmodesmata targeting and virus cell-to-cell movement element; sequence YQDLN. The helical transmembrane segment at 167–187 threads the bilayer; that stretch reads LWKDDLSFTIIAVTVLVGAML. At 188–190 the chain is on the cytoplasmic side; sequence ARC.

Belongs to the virgaviridae TGB3 movement protein family. In terms of assembly, interacts with movement protein TGB2. TGB1-TGB3-TGB2 complex formation is enhanced by ATP hydrolysis.

Its subcellular location is the host cell junction. The protein localises to the host plasmodesma. It is found in the host endoplasmic reticulum membrane. The protein resides in the host cytoplasm. It localises to the host cytoskeleton. Participates in the transport of viral genome to neighboring plant cells directly through plasmodesmata, without any budding. TGBp2 and TGBp3 are necessary for intracellular delivery of TGBp1-containing vRNPs to plasmodesmata. Can gate plasmodesmata and increase their size exclusion limit. Induces host actin cytoskeleton network thickening, which probably plays a major role in virus cell-to-cell movement. This is Movement protein TGB3 from Solanum nigrum (Black nightshade).